Here is a 116-residue protein sequence, read N- to C-terminus: Staphylococcal complement inhibitor (116 aa).

Positions 1–31 (MKIRKSILAGTLAIVLASPLVTNLDKNEAQA) are cleaved as a signal peptide. Residues 62-79 (LATGSLNTYYKRTIKISG) form an essential for activity region.

This sequence belongs to the SCIN family.

Its subcellular location is the secreted. Involved in countering the first line of host defense mechanisms. Efficiently inhibits opsonization, phagocytosis and killing of S.aureus by human neutrophils. Acts by binding and stabilizing human C3 convertases (C4b2a and C3bBb), leading to their inactivation. The convertases are no longer able to cleave complement C3, therefore preventing further C3b deposition on the bacterial surface and phagocytosis of the bacterium. Also prevents C5a-induced neutrophil responses. This is Staphylococcal complement inhibitor (scn) from Staphylococcus aureus (strain N315).